We begin with the raw amino-acid sequence, 120 residues long: PYEKIGAELVKEVAKKTDDVAGDGTTTATVLAQALVHEGLRNVAAGANPLSLKRGIEKAVEKVTETLLKGAKEVETKEQIAATAAISAGDQSIGDLIAEAMDKVGNEGVITVEESNTFGL.

Residue 23–27 (DGTTT) coordinates ATP.

Belongs to the chaperonin (HSP60) family. As to quaternary structure, forms a cylinder of 14 subunits composed of two heptameric rings stacked back-to-back. Interacts with the co-chaperonin GroES.

The protein localises to the cytoplasm. The enzyme catalyses ATP + H2O + a folded polypeptide = ADP + phosphate + an unfolded polypeptide.. Together with its co-chaperonin GroES, plays an essential role in assisting protein folding. The GroEL-GroES system forms a nano-cage that allows encapsulation of the non-native substrate proteins and provides a physical environment optimized to promote and accelerate protein folding. The sequence is that of Chaperonin GroEL from Mycobacterium shimoidei.